The sequence spans 371 residues: Putative HAD-like hydrolase Noc_2718 (371 aa).

Residues 1–288 (MKQKILLCSD…TGREESAEEE (288 aa)) form an HAD-like hydrolase region. Positions 291-371 (QSCAIYRSCK…QLSSREYRRS (81 aa)) constitute a YcgL domain.

In the N-terminal section; belongs to the HAD-like hydrolase superfamily.

The sequence is that of Putative HAD-like hydrolase Noc_2718 from Nitrosococcus oceani (strain ATCC 19707 / BCRC 17464 / JCM 30415 / NCIMB 11848 / C-107).